Reading from the N-terminus, the 344-residue chain is Phosphoribosylformylglycinamidine cyclo-ligase (344 aa).

It belongs to the AIR synthase family.

It is found in the cytoplasm. It catalyses the reaction 2-formamido-N(1)-(5-O-phospho-beta-D-ribosyl)acetamidine + ATP = 5-amino-1-(5-phospho-beta-D-ribosyl)imidazole + ADP + phosphate + H(+). The protein operates within purine metabolism; IMP biosynthesis via de novo pathway; 5-amino-1-(5-phospho-D-ribosyl)imidazole from N(2)-formyl-N(1)-(5-phospho-D-ribosyl)glycinamide: step 2/2. This Haemophilus influenzae (strain 86-028NP) protein is Phosphoribosylformylglycinamidine cyclo-ligase.